Reading from the N-terminus, the 85-residue chain is Large ribosomal subunit protein bL27 (85 aa).

A disordered region spans residues 1–20; the sequence is MAHKKAGGSTRNGRDSEAKR.

It belongs to the bacterial ribosomal protein bL27 family.

This chain is Large ribosomal subunit protein bL27, found in Cronobacter sakazakii (strain ATCC BAA-894) (Enterobacter sakazakii).